A 335-amino-acid polypeptide reads, in one-letter code: Glucokinase (335 aa).

Residue 11–16 (ADIGGT) coordinates ATP.

It belongs to the bacterial glucokinase family.

It localises to the cytoplasm. The enzyme catalyses D-glucose + ATP = D-glucose 6-phosphate + ADP + H(+). In Xanthomonas campestris pv. campestris (strain B100), this protein is Glucokinase.